The chain runs to 376 residues: Chaperone protein DnaJ (376 aa).

The region spanning 5–70 is the J domain; that stretch reads DYYEVLGVAR…QKRAAYDQFG (66 aa). The segment at 134–212 adopts a CR-type zinc-finger fold; that stretch reads GTSVKIKVPT…CHGHGRVEET (79 aa). Positions 147, 150, 164, 167, 186, 189, 200, and 203 each coordinate Zn(2+). CXXCXGXG motif repeat units lie at residues 147–154, 164–171, 186–193, and 200–207; these read CTNCGGSG, CNTCGGHG, CPTCRGQG, and CNKCHGHG.

This sequence belongs to the DnaJ family. Homodimer. Zn(2+) serves as cofactor.

Its subcellular location is the cytoplasm. Functionally, participates actively in the response to hyperosmotic and heat shock by preventing the aggregation of stress-denatured proteins and by disaggregating proteins, also in an autonomous, DnaK-independent fashion. Unfolded proteins bind initially to DnaJ; upon interaction with the DnaJ-bound protein, DnaK hydrolyzes its bound ATP, resulting in the formation of a stable complex. GrpE releases ADP from DnaK; ATP binding to DnaK triggers the release of the substrate protein, thus completing the reaction cycle. Several rounds of ATP-dependent interactions between DnaJ, DnaK and GrpE are required for fully efficient folding. Also involved, together with DnaK and GrpE, in the DNA replication of plasmids through activation of initiation proteins. The polypeptide is Chaperone protein DnaJ (Teredinibacter turnerae (strain ATCC 39867 / T7901)).